We begin with the raw amino-acid sequence, 431 residues long: DNA polymerase delta subunit 2 (431 aa).

This sequence belongs to the DNA polymerase delta/II small subunit family. In terms of assembly, component of both the DNA polymerase delta and DNA polymerase zeta complexes. The DNA polymerase delta complex consisting of three subunits: the catalytic subunit PolD1 and two accessory subunits PolD2/Pol31 and PolD3/Pol32. Within the delta complex, interacts with both PolD1 and PolD3, and is able to interact with PolD1 in the absence of PolD3. Component of the DNA polymerase zeta complex consisting of four subunits: the catalytic subunit PolZ1 and three accessory subunits PolZ2/Rev7, PolD2/Pol31 and PolD3/Pol32. Expressed in ovaries and embryos (at the protein level).

It localises to the nucleus. The protein localises to the nucleoplasm. In terms of biological role, accessory component of both the DNA polymerase delta complex and possibly the DNA polymerase zeta complex. As a component of the delta complex, participates in high fidelity genome replication, including lagging strand synthesis, DNA recombination and repair. Appears to promote the function of the DNA pol-delta complex accessory subunit PolD3 in both embryonic and postembryonic somatic cells. The chain is DNA polymerase delta subunit 2 from Drosophila melanogaster (Fruit fly).